The primary structure comprises 64 residues: Translation machinery-associated protein 7 (64 aa).

Positions 1–64 (MSGREGGKKK…GGGIKKSGKK (64 aa)) are disordered. Residues 21–50 (EMDEDEMAFKQKQKEDQKAMEQLKAKAAGK) are a coiled coil. Over residues 27-44 (MAFKQKQKEDQKAMEQLK) the composition is skewed to basic and acidic residues. Residues 52 to 64 (PLTGGGIKKSGKK) are compositionally biased toward gly residues.

The protein belongs to the TMA7 family.

In Danio rerio (Zebrafish), this protein is Translation machinery-associated protein 7 (tma7).